The following is a 124-amino-acid chain: S-adenosylmethionine decarboxylase proenzyme (124 aa).

S63 functions as the Schiff-base intermediate with substrate; via pyruvic acid in the catalytic mechanism. S63 bears the Pyruvic acid (Ser); by autocatalysis mark. The active-site Proton acceptor; for processing activity is H68. The Proton donor; for catalytic activity role is filled by C83.

It belongs to the prokaryotic AdoMetDC family. Type 1 subfamily. In terms of assembly, heterotetramer of two alpha and two beta chains arranged as a dimer of alpha/beta heterodimers. Requires pyruvate as cofactor. Is synthesized initially as an inactive proenzyme. Formation of the active enzyme involves a self-maturation process in which the active site pyruvoyl group is generated from an internal serine residue via an autocatalytic post-translational modification. Two non-identical subunits are generated from the proenzyme in this reaction, and the pyruvate is formed at the N-terminus of the alpha chain, which is derived from the carboxyl end of the proenzyme. The post-translation cleavage follows an unusual pathway, termed non-hydrolytic serinolysis, in which the side chain hydroxyl group of the serine supplies its oxygen atom to form the C-terminus of the beta chain, while the remainder of the serine residue undergoes an oxidative deamination to produce ammonia and the pyruvoyl group blocking the N-terminus of the alpha chain.

The catalysed reaction is S-adenosyl-L-methionine + H(+) = S-adenosyl 3-(methylsulfanyl)propylamine + CO2. The protein operates within amine and polyamine biosynthesis; S-adenosylmethioninamine biosynthesis; S-adenosylmethioninamine from S-adenosyl-L-methionine: step 1/1. In terms of biological role, catalyzes the decarboxylation of S-adenosylmethionine to S-adenosylmethioninamine (dcAdoMet), the propylamine donor required for the synthesis of the polyamines spermine and spermidine from the diamine putrescine. The polypeptide is S-adenosylmethionine decarboxylase proenzyme (Geobacillus kaustophilus (strain HTA426)).